A 497-amino-acid polypeptide reads, in one-letter code: MHQVEEIILIVENLAEVRGKTPHYRHLYVQVLAAIAVGILLGYFYPDVGSKMKPLGDAFIMLVKMIIAPVIFLTVATGIAGMTDLAKVGRVAGKAMIYFLTFSTLALLVGLVVANVVQPGAGMHIDPASLDAKAIATYAEKAHEQSVTGFLMNIIPTTLVGAFAEGDILQVLFISVLFGISLAIVGKKAEAVVDFLHALTLPIFRLVAILMKAAPIGAFGAMAFTIGKYGVASIANLAMLIGTFYLTSFLFVFMVLGAVARYNGFSIVALIRYIKEELLLVLGTSSSEAALPGLMNKMEKAGCKRSVVGLVIPTGYSFNLDGTNIYMTLAALFIAQATDTPISYGDQILLLLIAMLSSKGAAGITGAGFITLAATLSAVPSVPVAGMALILGIDRFMSECRAITNIIGNAVATIVVAKWEGELAPAQLATTLAGKAPVETMSGLSSQRSDTVELGQKVLFGATNSADRTLAGRPGGRDSRRIAPDHSAQVFGGPLSL.

8 helical membrane-spanning segments follow: residues 27–45 (LYVQ…GYFY), 60–82 (IMLV…IAGM), 95–117 (AMIY…ANVV), 168–185 (ILQV…LAIV), 205–227 (RLVA…FTIG), 237–259 (LAML…LGAV), 348–370 (ILLL…AGFI), and 374–393 (ATLS…ILGI). Residues 466–497 (ADRTLAGRPGGRDSRRIAPDHSAQVFGGPLSL) form a disordered region. A compositionally biased stretch (basic and acidic residues) spans 475–484 (GGRDSRRIAP).

Belongs to the dicarboxylate/amino acid:cation symporter (DAACS) (TC 2.A.23) family.

It is found in the cell inner membrane. Responsible for the transport of dicarboxylates such as succinate, fumarate, and malate from the periplasm across the inner membrane. This transport system plays an essential role in the energy supply of tropical rhizobium-legume symbionts. This chain is C4-dicarboxylate transport protein (dctA1), found in Sinorhizobium fredii (strain NBRC 101917 / NGR234).